A 158-amino-acid chain; its full sequence is Methylated-DNA--protein-cysteine methyltransferase (158 aa).

Catalysis depends on cysteine 126, which acts as the Nucleophile; methyl group acceptor.

The protein belongs to the MGMT family.

Its subcellular location is the cytoplasm. The catalysed reaction is a 6-O-methyl-2'-deoxyguanosine in DNA + L-cysteinyl-[protein] = S-methyl-L-cysteinyl-[protein] + a 2'-deoxyguanosine in DNA. It catalyses the reaction a 4-O-methyl-thymidine in DNA + L-cysteinyl-[protein] = a thymidine in DNA + S-methyl-L-cysteinyl-[protein]. Functionally, involved in the cellular defense against the biological effects of O6-methylguanine (O6-MeG) and O4-methylthymine (O4-MeT) in DNA. Repairs the methylated nucleobase in DNA by stoichiometrically transferring the methyl group to a cysteine residue in the enzyme. This is a suicide reaction: the enzyme is irreversibly inactivated. In Methanosarcina barkeri (strain Fusaro / DSM 804), this protein is Methylated-DNA--protein-cysteine methyltransferase.